A 457-amino-acid chain; its full sequence is Cytochrome b-c1 complex subunit 1, mitochondrial (457 aa).

A mitochondrion-targeting transit peptide spans 1-26 (MLRTVTSKTVSNQFKRSLATAVATPK).

This sequence belongs to the peptidase M16 family. UQCRC1/QCR1 subfamily. In terms of assembly, component of the ubiquinol-cytochrome c oxidoreductase (cytochrome b-c1 complex, complex III, CIII), a multisubunit enzyme composed of 10 subunits. The complex is composed of 3 respiratory subunits cytochrome b (COB), cytochrome c1 (CYT1) and Rieske protein (RIP1), 2 core protein subunits COR1 and QCR2, and 5 low-molecular weight protein subunits QCR6, QCR7, QCR8, QCR9 and QCR10. The complex exists as an obligatory dimer and forms supercomplexes (SCs) in the inner mitochondrial membrane with a monomer or a dimer of cytochrome c oxidase (complex IV, CIV), resulting in 2 different assemblies (supercomplexes III(2)IV and III(2)IV(2)). COR1 interacts with COX5A at the CIII-CIV interface.

It localises to the mitochondrion inner membrane. Functionally, component of the ubiquinol-cytochrome c oxidoreductase, a multisubunit transmembrane complex that is part of the mitochondrial electron transport chain which drives oxidative phosphorylation. The respiratory chain contains 3 multisubunit complexes succinate dehydrogenase (complex II, CII), ubiquinol-cytochrome c oxidoreductase (cytochrome b-c1 complex, complex III, CIII) and cytochrome c oxidase (complex IV, CIV), that cooperate to transfer electrons derived from NADH and succinate to molecular oxygen, creating an electrochemical gradient over the inner membrane that drives transmembrane transport and the ATP synthase. The cytochrome b-c1 complex catalyzes electron transfer from ubiquinol to cytochrome c, linking this redox reaction to translocation of protons across the mitochondrial inner membrane, with protons being carried across the membrane as hydrogens on the quinol. In the process called Q cycle, 2 protons are consumed from the matrix, 4 protons are released into the intermembrane space and 2 electrons are passed to cytochrome c. This is Cytochrome b-c1 complex subunit 1, mitochondrial (COR1) from Saccharomyces cerevisiae (strain ATCC 204508 / S288c) (Baker's yeast).